Here is a 187-residue protein sequence, read N- to C-terminus: Large ribosomal subunit protein eL18A (187 aa).

Residues Ser16 and Ser64 each carry the phosphoserine modification. Phosphothreonine occurs at positions 87, 89, and 134. Position 136 is a phosphoserine (Ser136). A Phosphothreonine modification is found at Thr138.

It belongs to the eukaryotic ribosomal protein eL18 family. In terms of assembly, component of the large ribosomal subunit (LSU). Mature yeast ribosomes consist of a small (40S) and a large (60S) subunit. The 40S small subunit contains 1 molecule of ribosomal RNA (18S rRNA) and at least 33 different proteins. The large 60S subunit contains 3 rRNA molecules (25S, 5.8S and 5S rRNA) and at least 46 different proteins. eL18 interacts with NAP1.

It localises to the cytoplasm. Functionally, component of the ribosome, a large ribonucleoprotein complex responsible for the synthesis of proteins in the cell. The small ribosomal subunit (SSU) binds messenger RNAs (mRNAs) and translates the encoded message by selecting cognate aminoacyl-transfer RNA (tRNA) molecules. The large subunit (LSU) contains the ribosomal catalytic site termed the peptidyl transferase center (PTC), which catalyzes the formation of peptide bonds, thereby polymerizing the amino acids delivered by tRNAs into a polypeptide chain. The nascent polypeptides leave the ribosome through a tunnel in the LSU and interact with protein factors that function in enzymatic processing, targeting, and the membrane insertion of nascent chains at the exit of the ribosomal tunnel. The chain is Large ribosomal subunit protein eL18A (rpl1801) from Schizosaccharomyces pombe (strain 972 / ATCC 24843) (Fission yeast).